Consider the following 230-residue polypeptide: Large ribosomal subunit protein uL1 (230 aa).

Belongs to the universal ribosomal protein uL1 family. Part of the 50S ribosomal subunit.

Binds directly to 23S rRNA. The L1 stalk is quite mobile in the ribosome, and is involved in E site tRNA release. Functionally, protein L1 is also a translational repressor protein, it controls the translation of the L11 operon by binding to its mRNA. This Bacillus anthracis (strain A0248) protein is Large ribosomal subunit protein uL1.